The primary structure comprises 121 residues: MASKIRKVTNQNMRINSSLSKSSTFSTRLRITDSYLSSPSVTELAPLTLTTGDDFTVTLSVTPTMNSLESQVICPRAYDCKERIPPNQHIVSLELTYHPASIEPTATGSPETRDPDPSAYA.

Residues 101 to 121 are disordered; the sequence is SIEPTATGSPETRDPDPSAYA. Residues 111-121 are compositionally biased toward basic and acidic residues; the sequence is ETRDPDPSAYA.

Its subcellular location is the mitochondrion. This is an uncharacterized protein from Arabidopsis thaliana (Mouse-ear cress).